The sequence spans 215 residues: Urease accessory protein UreF (215 aa).

It belongs to the UreF family. As to quaternary structure, ureD, UreF and UreG form a complex that acts as a GTP-hydrolysis-dependent molecular chaperone, activating the urease apoprotein by helping to assemble the nickel containing metallocenter of UreC. The UreE protein probably delivers the nickel.

The protein localises to the cytoplasm. In terms of biological role, required for maturation of urease via the functional incorporation of the urease nickel metallocenter. The protein is Urease accessory protein UreF of Paracoccus denitrificans (strain Pd 1222).